The sequence spans 803 residues: Ras GTPase-activating protein 4 (803 aa).

2 consecutive C2 domains span residues 1 to 105 (MAKR…SGWA) and 116 to 232 (VQGE…EGWF). Ca(2+) is bound by residues aspartate 21, aspartate 27, aspartate 74, aspartate 76, serine 79, aspartate 82, aspartate 149, aspartate 155, aspartate 202, aspartate 204, serine 207, and aspartate 210. The region spanning 318-546 (GLAKDFLDLL…AQLKDFITKL (229 aa)) is the Ras-GAP domain. The PH domain occupies 566–673 (PPVKEGPLFI…WLSALRKVSI (108 aa)). Residues 675 to 711 (NTGLLGSYHPGVFRGDKWSCCHQKEKTGQGCDKTRSR) form a Btk-type zinc finger. Positions 683, 694, 695, and 705 each coordinate Zn(2+). The disordered stretch occupies residues 781 to 803 (EAHSSSPAGSPPSEPNCLLELQT).

The cofactor is Ca(2+). In terms of tissue distribution, widely expressed.

Its subcellular location is the cytoplasm. The protein resides in the cytosol. It localises to the cell membrane. Functionally, ca(2+)-dependent Ras GTPase-activating protein, that switches off the Ras-MAPK pathway following a stimulus that elevates intracellular calcium. Functions as an adaptor for Cdc42 and Rac1 during FcR-mediated phagocytosis. This Homo sapiens (Human) protein is Ras GTPase-activating protein 4 (RASA4).